A 318-amino-acid chain; its full sequence is MEKLVTQQVQNVDPKQSEILNISEIPAENPTETPIISKQKLLEAGVYFGHKASQWHPKMAQFLLKKKRNETHIIDVLKTQKMLEIAYKLVEKFAQKGAKFIFVGTKKQAKKVIEEQAVRTNSIYVSGRWLGGTLTNNRTILSRLKTMENLEKQAAENFQGYTKKEKLAKQKQLAKLQKNLNGIKGLKDVPLFSLIMLVADPLKDAIAVKEARKKGIKIIGITDSNVDPSLVDFGIPANDDSTKSITLIFTVLADAIASAKGGKKLFAYQSDENIILPEDPEKELKQTRYRNNSFEKFARQKNTLKESQVLKPNTEIQA.

Belongs to the universal ribosomal protein uS2 family.

In Mesomycoplasma hyopneumoniae (strain J / ATCC 25934 / NCTC 10110) (Mycoplasma hyopneumoniae), this protein is Small ribosomal subunit protein uS2.